Consider the following 330-residue polypeptide: Ketol-acid reductoisomerase (NADP(+)) (330 aa).

Residues L3–T184 enclose the KARI N-terminal Rossmann domain. NADP(+)-binding positions include Y26–Q29, S52, and S54. Residue H109 is part of the active site. G135 contributes to the NADP(+) binding site. In terms of domain architecture, KARI C-terminal knotted spans S185 to K329. Mg(2+) contacts are provided by D193, E197, E229, and E233. S254 is a binding site for substrate.

This sequence belongs to the ketol-acid reductoisomerase family. Requires Mg(2+) as cofactor.

The enzyme catalyses (2R)-2,3-dihydroxy-3-methylbutanoate + NADP(+) = (2S)-2-acetolactate + NADPH + H(+). It carries out the reaction (2R,3R)-2,3-dihydroxy-3-methylpentanoate + NADP(+) = (S)-2-ethyl-2-hydroxy-3-oxobutanoate + NADPH + H(+). The protein operates within amino-acid biosynthesis; L-isoleucine biosynthesis; L-isoleucine from 2-oxobutanoate: step 2/4. Its pathway is amino-acid biosynthesis; L-valine biosynthesis; L-valine from pyruvate: step 2/4. Its function is as follows. Involved in the biosynthesis of branched-chain amino acids (BCAA). Catalyzes an alkyl-migration followed by a ketol-acid reduction of (S)-2-acetolactate (S2AL) to yield (R)-2,3-dihydroxy-isovalerate. In the isomerase reaction, S2AL is rearranged via a Mg-dependent methyl migration to produce 3-hydroxy-3-methyl-2-ketobutyrate (HMKB). In the reductase reaction, this 2-ketoacid undergoes a metal-dependent reduction by NADPH to yield (R)-2,3-dihydroxy-isovalerate. This Helicobacter pylori (strain J99 / ATCC 700824) (Campylobacter pylori J99) protein is Ketol-acid reductoisomerase (NADP(+)).